Reading from the N-terminus, the 362-residue chain is 3-dehydroquinate synthase (362 aa).

Residues 71–76 (DGEQYK), 105–109 (GVIGD), 129–130 (TT), Lys142, Lys151, and 169–172 (CLST) contribute to the NAD(+) site. Zn(2+)-binding residues include Glu184, His247, and His264.

The protein belongs to the sugar phosphate cyclases superfamily. Dehydroquinate synthase family. Co(2+) serves as cofactor. Zn(2+) is required as a cofactor. The cofactor is NAD(+).

The protein resides in the cytoplasm. The enzyme catalyses 7-phospho-2-dehydro-3-deoxy-D-arabino-heptonate = 3-dehydroquinate + phosphate. The protein operates within metabolic intermediate biosynthesis; chorismate biosynthesis; chorismate from D-erythrose 4-phosphate and phosphoenolpyruvate: step 2/7. Its function is as follows. Catalyzes the conversion of 3-deoxy-D-arabino-heptulosonate 7-phosphate (DAHP) to dehydroquinate (DHQ). This chain is 3-dehydroquinate synthase, found in Vibrio atlanticus (strain LGP32) (Vibrio splendidus (strain Mel32)).